Reading from the N-terminus, the 464-residue chain is ERO1-like protein alpha (464 aa).

Residues 1–23 form the signal peptide; sequence MGRAWGLLVGLLGVVWLLRLGHG. 8 disulfide bridges follow: C35–C48, C37–C46, C85–C387, C94–C99, C94–C130, C99–C104, C207–C237, and C390–C393. A phosphoserine mark is found at S106, S142, and S144. Residues R186, T188, and W199 each contribute to the FAD site. Residues S248 and H251 each coordinate FAD. N-linked (GlcNAc...) asparagine glycosylation is present at N276. FAD is bound by residues R283 and R296. N380 carries N-linked (GlcNAc...) asparagine glycosylation.

The protein belongs to the EROs family. In terms of assembly, predominantly monomer. May function both as a monomer and a homodimer. Interacts with PDILT. Interacts with ERP44; the interaction results in retention of ERO1A in the endoplasmic reticulum. Requires FAD as cofactor. N-glycosylated. Post-translationally, the Cys-94/Cys-99 and Cys-390/Cys-393 disulfide bonds constitute the redox-active center. The Cys-94/Cys-99 disulfide bond may accept electron from P4HB and funnel them to the active site disulfide Cys-390/Cys-393. The regulatory Cys-99/Cys-104 disulfide bond stabilizes the other regulatory bond Cys-94/Cys-130. In terms of processing, phosphorylated on Ser-144 by FAM20C in the Golgi which increases its enzymatic activity. Phosphorylation is induced by lactation. It is also induced by hypoxia and reductive stress. As to expression, widely expressed (at protein level). In the mammary gland, expressed at higher levels in lactating mice than in virgin mice (at protein level).

The protein localises to the endoplasmic reticulum membrane. Its subcellular location is the golgi apparatus lumen. It is found in the secreted. The protein resides in the cell projection. It localises to the dendrite. With respect to regulation, enzyme activity is tightly regulated to prevent the accumulation of reactive oxygen species in the endoplasmic reticulum. Reversibly down-regulated by the formation of disulfide bonds between the active site Cys-94 and Cys-130, and between Cys-99 and Cys-104. Glutathione may be required to regulate its activity in the endoplasmic reticulum. Oxidoreductase involved in disulfide bond formation in the endoplasmic reticulum. Efficiently reoxidizes P4HB/PDI, the enzyme catalyzing protein disulfide formation, in order to allow P4HB to sustain additional rounds of disulfide formation. Following P4HB reoxidation, passes its electrons to molecular oxygen via FAD, leading to the production of reactive oxygen species (ROS) in the cell. Required for the proper folding of immunoglobulins. Plays an important role in ER stress-induced, CHOP-dependent apoptosis by activating the inositol 1,4,5-trisphosphate receptor IP3R1. The polypeptide is ERO1-like protein alpha (Mus musculus (Mouse)).